The primary structure comprises 508 residues: Monocarboxylate transporter 9 (508 aa).

The Cytoplasmic portion of the chain corresponds to 1–12 (MEFQKSPDGGWG). Helical transmembrane passes span 13–33 (WVIV…PLAV), 53–73 (WVGS…SLFV), 80–100 (PVTI…SLAP), 102–122 (IYFL…LLYT), 137–157 (GLAL…YAAL), 164–184 (FYGL…ILAC), 303–323 (VFSA…PPSL), 341–361 (MPLI…LGIL), 370–390 (LYLY…IPFA), 396–416 (LAIL…FPYV), 431–451 (GILM…VGWF), and 460–480 (IAFY…LLAI). Residues 481-508 (LPCWDMCNKKLPKPAVPTTFFYKVASNV) lie on the Cytoplasmic side of the membrane.

The protein belongs to the major facilitator superfamily. Monocarboxylate porter (TC 2.A.1.13) family.

The protein resides in the cell membrane. The enzyme catalyses creatine(in) = creatine(out). It carries out the reaction (R)-carnitine(in) = (R)-carnitine(out). Its function is as follows. Extracellular pH-and Na(+)-sensitive low-affinity creatine transporter. Also functions as a pH-independent carnitine efflux transporter. The protein is Monocarboxylate transporter 9 (Slc16a9) of Mus musculus (Mouse).